The chain runs to 701 residues: Polyribonucleotide nucleotidyltransferase (701 aa).

Residues aspartate 485 and aspartate 491 each coordinate Mg(2+). The 60-residue stretch at 552–611 (PKTQIMSINPDKIRDVIGAGGKVINKIIQDTGVKIDIKEDGTVFVSSTDHNGVNEAIKII) folds into the KH domain. In terms of domain architecture, S1 motif spans 621–689 (GEVYLGKVTK…NQGRINLSRK (69 aa)).

This sequence belongs to the polyribonucleotide nucleotidyltransferase family. Requires Mg(2+) as cofactor.

The protein localises to the cytoplasm. The enzyme catalyses RNA(n+1) + phosphate = RNA(n) + a ribonucleoside 5'-diphosphate. Its function is as follows. Involved in mRNA degradation. Catalyzes the phosphorolysis of single-stranded polyribonucleotides processively in the 3'- to 5'-direction. The sequence is that of Polyribonucleotide nucleotidyltransferase from Clostridium beijerinckii (strain ATCC 51743 / NCIMB 8052) (Clostridium acetobutylicum).